A 343-amino-acid polypeptide reads, in one-letter code: Phenylalanine--tRNA ligase alpha subunit (343 aa).

Residue glutamate 268 coordinates Mg(2+).

This sequence belongs to the class-II aminoacyl-tRNA synthetase family. Phe-tRNA synthetase alpha subunit type 1 subfamily. As to quaternary structure, tetramer of two alpha and two beta subunits. Requires Mg(2+) as cofactor.

The protein localises to the cytoplasm. The enzyme catalyses tRNA(Phe) + L-phenylalanine + ATP = L-phenylalanyl-tRNA(Phe) + AMP + diphosphate + H(+). The chain is Phenylalanine--tRNA ligase alpha subunit from Cupriavidus taiwanensis (strain DSM 17343 / BCRC 17206 / CCUG 44338 / CIP 107171 / LMG 19424 / R1) (Ralstonia taiwanensis (strain LMG 19424)).